A 310-amino-acid polypeptide reads, in one-letter code: Phosphoribosylaminoimidazole-succinocarboxamide synthase (310 aa).

The protein belongs to the SAICAR synthetase family.

It carries out the reaction 5-amino-1-(5-phospho-D-ribosyl)imidazole-4-carboxylate + L-aspartate + ATP = (2S)-2-[5-amino-1-(5-phospho-beta-D-ribosyl)imidazole-4-carboxamido]succinate + ADP + phosphate + 2 H(+). The protein operates within purine metabolism; IMP biosynthesis via de novo pathway; 5-amino-1-(5-phospho-D-ribosyl)imidazole-4-carboxamide from 5-amino-1-(5-phospho-D-ribosyl)imidazole-4-carboxylate: step 1/2. The chain is Phosphoribosylaminoimidazole-succinocarboxamide synthase from Stenotrophomonas maltophilia (strain K279a).